The following is a 603-amino-acid chain: NADH-ubiquinone oxidoreductase chain 5 (603 aa).

Helical transmembrane passes span 4-24 (FTTM…ATLI), 38-58 (TAIA…ICLG), 89-109 (FLPV…WYMA), 122-142 (LIFL…QLFI), 171-191 (AILY…WFLL), 211-233 (LPLL…HPWL), 241-261 (TPVS…FLLI), 273-293 (IQTL…ICAL), 301-320 (IVAF…IGIN), 325-347 (ALLH…GSII), 366-386 (MPLT…MPFL), 405-424 (NTWA…AYST), 457-477 (LMLG…PMSL), 488-508 (LAAL…NYLA), 524-544 (IMLG…SLLM), and 582-602 (GLIK…LLMI).

This sequence belongs to the complex I subunit 5 family. As to quaternary structure, core subunit of respiratory chain NADH dehydrogenase (Complex I) which is composed of 45 different subunits.

It localises to the mitochondrion inner membrane. It carries out the reaction a ubiquinone + NADH + 5 H(+)(in) = a ubiquinol + NAD(+) + 4 H(+)(out). In terms of biological role, core subunit of the mitochondrial membrane respiratory chain NADH dehydrogenase (Complex I) which catalyzes electron transfer from NADH through the respiratory chain, using ubiquinone as an electron acceptor. Essential for the catalytic activity and assembly of complex I. This chain is NADH-ubiquinone oxidoreductase chain 5 (MT-ND5), found in Pongo abelii (Sumatran orangutan).